Consider the following 426-residue polypeptide: tRNA methyltransferase 10 homolog C (426 aa).

The N-terminal 41 residues, methionine 1–tyrosine 41, are a transit peptide targeting the mitochondrion. Position 86 is a phosphoserine (serine 86). Residues leucine 138–glutamine 166 are a coiled coil. The region spanning methionine 193–glycine 385 is the SAM-dependent MTase TRM10-type domain.

The protein belongs to the class IV-like SAM-binding methyltransferase superfamily. TRM10 family. Component of mitochondrial ribonuclease P, a complex composed of TRMT10C/MRPP1, HSD17B10/MRPP2 and PRORP/MRPP3. Interacts with HSD17B10/MRPP2; forming the MRPP1-MRPP2 subcomplex of the mitochondrial ribonuclease P complex. Interacts with GRSF1.

Its subcellular location is the mitochondrion matrix. It localises to the mitochondrion nucleoid. The catalysed reaction is adenosine(9) in tRNA + S-adenosyl-L-methionine = N(1)-methyladenosine(9) in tRNA + S-adenosyl-L-homocysteine + H(+). It catalyses the reaction guanosine(9) in tRNA + S-adenosyl-L-methionine = N(1)-methylguanosine(9) in tRNA + S-adenosyl-L-homocysteine + H(+). The enzyme catalyses an adenosine in mRNA + S-adenosyl-L-methionine = an N(1)-methyladenosine in mRNA + S-adenosyl-L-homocysteine + H(+). Mitochondrial tRNA N(1)-methyltransferase involved in mitochondrial tRNA maturation. Component of mitochondrial ribonuclease P, a complex composed of TRMT10C/MRPP1, HSD17B10/MRPP2 and PRORP/MRPP3, which cleaves tRNA molecules in their 5'-ends. Together with HSD17B10/MRPP2, forms a subcomplex of the mitochondrial ribonuclease P, named MRPP1-MRPP2 subcomplex, which displays functions that are independent of the ribonuclease P activity. The MRPP1-MRPP2 subcomplex catalyzes the formation of N(1)-methylguanine and N(1)-methyladenine at position 9 (m1G9 and m1A9, respectively) in tRNAs; TRMT10C/MRPP1 acting as the catalytic N(1)-methyltransferase subunit. The MRPP1-MRPP2 subcomplex also acts as a tRNA maturation platform: following 5'-end cleavage by the mitochondrial ribonuclease P complex, the MRPP1-MRPP2 subcomplex enhances the efficiency of 3'-processing catalyzed by ELAC2, retains the tRNA product after ELAC2 processing and presents the nascent tRNA to the mitochondrial CCA tRNA nucleotidyltransferase TRNT1 enzyme. In addition to tRNA N(1)-methyltransferase activity, TRMT10C/MRPP1 also acts as a mRNA N(1)-methyltransferase by mediating methylation of adenosine residues at the N(1) position of MT-ND5 mRNA. Associates with mitochondrial DNA complexes at the nucleoids to initiate RNA processing and ribosome assembly. The protein is tRNA methyltransferase 10 homolog C of Bos taurus (Bovine).